The chain runs to 400 residues: Transposase for insertion sequence element ISRM3 (400 aa).

It belongs to the transposase mutator family.

Required for the transposition of the insertion element. The polypeptide is Transposase for insertion sequence element ISRM3 (Rhizobium meliloti (strain 1021) (Ensifer meliloti)).